The sequence spans 217 residues: MADHKLPRKEVAPRPDQTELRVGRLTKAHGLKGAIKLELFTDEPGKRFVPGAVFTLQVPTASKWHGKTLALRELRWYNGHPVGFFDGVDDRTEAESLVKAILWVNQDVRELPDEEDAWYDNQLVGLSAHRDGAVVGAIVRVDHLPGQDLLAIKTPGGEVLVPFVKAIVPEVDLAARTVTLTPPPGLFEDLPDDAPAAGDESEPVSPPVTAEETPGGE.

The PRC barrel domain maps to 115–186 (EDAWYDNQLV…TVTLTPPPGL (72 aa)). Residues 181–217 (TPPPGLFEDLPDDAPAAGDESEPVSPPVTAEETPGGE) are disordered.

The protein belongs to the RimM family. In terms of assembly, binds ribosomal protein uS19.

It localises to the cytoplasm. Functionally, an accessory protein needed during the final step in the assembly of 30S ribosomal subunit, possibly for assembly of the head region. Essential for efficient processing of 16S rRNA. May be needed both before and after RbfA during the maturation of 16S rRNA. It has affinity for free ribosomal 30S subunits but not for 70S ribosomes. In Leifsonia xyli subsp. xyli (strain CTCB07), this protein is Ribosome maturation factor RimM.